The following is a 506-amino-acid chain: Probable lipid II flippase MurJ (506 aa).

The next 13 helical transmembrane spans lie at Y4–V24, T86–A106, V127–V147, I153–F173, I181–A201, I232–L252, A263–F283, I308–L328, T345–F365, T377–I397, L405–L425, I436–F456, and L474–I494.

This sequence belongs to the MurJ/MviN family.

The protein localises to the cell inner membrane. It functions in the pathway cell wall biogenesis; peptidoglycan biosynthesis. Functionally, involved in peptidoglycan biosynthesis. Transports lipid-linked peptidoglycan precursors from the inner to the outer leaflet of the cytoplasmic membrane. The polypeptide is Probable lipid II flippase MurJ (Borreliella burgdorferi (strain ATCC 35210 / DSM 4680 / CIP 102532 / B31) (Borrelia burgdorferi)).